The primary structure comprises 307 residues: Oxygen-dependent coproporphyrinogen-III oxidase (307 aa).

Ser-99 is a substrate binding site. Residues His-103 and His-113 each contribute to the a divalent metal cation site. The active-site Proton donor is the His-113. A substrate-binding site is contributed by 115–117 (NVR). A divalent metal cation-binding residues include His-152 and His-182. Positions 247–282 (YVEFNLVFDRGTLFGLQSGGRTESILMSMPPVVNWR) are important for dimerization. 265-267 (GGR) provides a ligand contact to substrate.

This sequence belongs to the aerobic coproporphyrinogen-III oxidase family. As to quaternary structure, homodimer. A divalent metal cation serves as cofactor.

The protein localises to the cytoplasm. It catalyses the reaction coproporphyrinogen III + O2 + 2 H(+) = protoporphyrinogen IX + 2 CO2 + 2 H2O. Its pathway is porphyrin-containing compound metabolism; protoporphyrin-IX biosynthesis; protoporphyrinogen-IX from coproporphyrinogen-III (O2 route): step 1/1. In terms of biological role, involved in the heme biosynthesis. Catalyzes the aerobic oxidative decarboxylation of propionate groups of rings A and B of coproporphyrinogen-III to yield the vinyl groups in protoporphyrinogen-IX. In Paraburkholderia xenovorans (strain LB400), this protein is Oxygen-dependent coproporphyrinogen-III oxidase.